Consider the following 232-residue polypeptide: Orotidine 5'-phosphate decarboxylase (232 aa).

Residues D13, K35, 62–71 (DLKFHDIPNT), T122, R182, Q191, G211, and R212 contribute to the substrate site. The Proton donor role is filled by K64.

Belongs to the OMP decarboxylase family. Type 1 subfamily. Homodimer.

The catalysed reaction is orotidine 5'-phosphate + H(+) = UMP + CO2. It participates in pyrimidine metabolism; UMP biosynthesis via de novo pathway; UMP from orotate: step 2/2. Functionally, catalyzes the decarboxylation of orotidine 5'-monophosphate (OMP) to uridine 5'-monophosphate (UMP). The chain is Orotidine 5'-phosphate decarboxylase from Pseudomonas syringae pv. syringae (strain B728a).